A 358-amino-acid polypeptide reads, in one-letter code: MLERLNFIENKYEELSNKISDPSVMANQKEWQKLCKEHADLEIIVNTYREYKKAQEDLESDKEMLKEESDKELREMAQEEIKELTLKLEDLERELTILLLPKDPNDDKDVFIEIRAGAGGEEAALFASNLLRMYTRYAERKNWKVETISLNATDIGGFKEVTVAVKGKGAYSRLKYESGVHRVQRVPDTESSGRIHTSTATVAVLPEVDDVDININANDLRIDVYRASGHGGQCVNTTDSAVRITHLPTGLVVTCQDEKSQLKNKEKAMKVLKARLFEAAEAERAASIAEDRKSQVGTGDRSERIRTYNYPQGRITDHRIGLTLYKLETFLDGDIDEAIEALVTEDQAEKMKNLGRVN.

Gln233 carries the post-translational modification N5-methylglutamine.

The protein belongs to the prokaryotic/mitochondrial release factor family. Post-translationally, methylated by PrmC. Methylation increases the termination efficiency of RF1.

The protein localises to the cytoplasm. Its function is as follows. Peptide chain release factor 1 directs the termination of translation in response to the peptide chain termination codons UAG and UAA. This is Peptide chain release factor 1 from Clostridium botulinum (strain Loch Maree / Type A3).